Reading from the N-terminus, the 220-residue chain is Ras-related protein Rab-3A (220 aa).

GTP is bound by residues Ser-31, Ser-32, Val-33, Gly-34, Lys-35, Thr-36, Ser-37, Thr-48, Pro-49, Ser-53, and Thr-54. Thr-36 serves as a coordination point for Mg(2+). The short motif at 49–58 is the Switch 1 element; the sequence is PAFVSTVGID. Residues Thr-54 and Asp-77 each coordinate Mg(2+). Gly-80 serves as a coordination point for GTP. The Switch 2 motif lies at 80–96; the sequence is GQERYRTITTAYYRGAM. Thr-86 carries the post-translational modification Phosphothreonine. GTP-binding residues include Asn-135, Lys-136, Asp-138, Ala-166, and Lys-167. Phosphoserine is present on residues Ser-188 and Ser-190. Positions 194–220 are disordered; that stretch reads ADPAVTGAKQGPQLTDQQAPPHQDCAC. S-geranylgeranyl cysteine attachment occurs at residues Cys-218 and Cys-220. Cys-220 is modified (cysteine methyl ester).

Belongs to the small GTPase superfamily. Rab family. In terms of assembly, interacts with RIMS1 and RIMS2. Interacts with Rabphilin-3A/RPH3A and Rab effector Noc2/RPH3AL. Interacts with SYTL4. Interacts with RAB3IP. Interacts with SGSM1 and SGSM3. Interacts with SYT1. Interacts with MYH9; this interaction is essential for lysosome exocytosis and plasma membrane repair. Interacts with STXBP1; this interaction promotes RAB3A dissociation from the vesicle membrane. Interacts with SNCA. Interacts with GDI1, GDI2, CHM and CHML; phosphorylation at Thr-86 disrupts these interactions. Interacts with MADD (via uDENN domain); the GTP-bound form is preferred for interaction. Mg(2+) serves as cofactor. Post-translationally, phosphorylation of Thr-86 in the switch II region by LRRK2 prevents the association of RAB regulatory proteins, including CHM, CHML and RAB GDP dissociation inhibitors GDI1 and GDI2. In terms of tissue distribution, specifically expressed in brain.

The protein localises to the cytoplasm. The protein resides in the cytosol. It is found in the lysosome. Its subcellular location is the cytoplasmic vesicle. It localises to the secretory vesicle. The protein localises to the cell projection. The protein resides in the axon. It is found in the cell membrane. Its subcellular location is the presynapse. It localises to the postsynapse. The catalysed reaction is GTP + H2O = GDP + phosphate + H(+). Regulated by guanine nucleotide exchange factors (GEFs) including RAB3IL1 and MADD which promote the exchange of bound GDP for free GTP. Regulated by GTPase activating proteins (GAPs) including RAB3GAP1 and TBC1D10B which increase the GTP hydrolysis activity. Inhibited by GDP dissociation inhibitors (GDIs) which prevent Rab-GDP dissociation. Its function is as follows. The small GTPases Rab are key regulators of intracellular membrane trafficking, from the formation of transport vesicles to their fusion with membranes. Rabs cycle between an inactive GDP-bound form and an active GTP-bound form that is able to recruit to membranes different sets of downstream effectors directly responsible for vesicle formation, movement, tethering and fusion. RAB3A plays a central role in regulated exocytosis and secretion. Controls the recruitment, tethering and docking of secretory vesicles to the plasma membrane. Upon stimulation, switches to its active GTP-bound form, cycles to vesicles and recruits effectors such as RIMS1, RIMS2, Rabphilin-3A/RPH3A, RPH3AL or SYTL4 to help the docking of vesicules onto the plasma membrane. Upon GTP hydrolysis by GTPase-activating protein, dissociates from the vesicle membrane allowing the exocytosis to proceed. Stimulates insulin secretion through interaction with RIMS2 or RPH3AL effectors in pancreatic beta cells. Regulates calcium-dependent lysosome exocytosis and plasma membrane repair (PMR) via the interaction with 2 effectors, SYTL4 and myosin-9/MYH9. Acts as a positive regulator of acrosome content secretion in sperm cells by interacting with RIMS1. Also plays a role in the regulation of dopamine release by interacting with synaptotagmin I/SYT. The polypeptide is Ras-related protein Rab-3A (RAB3A) (Bos taurus (Bovine)).